A 497-amino-acid chain; its full sequence is Serine hydroxymethyltransferase (497 aa).

Residues Leu-176 and 180 to 182 (GHL) contribute to the (6S)-5,6,7,8-tetrahydrofolate site. N6-(pyridoxal phosphate)lysine is present on Lys-289.

The protein belongs to the SHMT family. As to quaternary structure, homodimer. It depends on pyridoxal 5'-phosphate as a cofactor.

The protein resides in the cytoplasm. It catalyses the reaction (6R)-5,10-methylene-5,6,7,8-tetrahydrofolate + glycine + H2O = (6S)-5,6,7,8-tetrahydrofolate + L-serine. Its pathway is one-carbon metabolism; tetrahydrofolate interconversion. The protein operates within amino-acid biosynthesis; glycine biosynthesis; glycine from L-serine: step 1/1. Catalyzes the reversible interconversion of serine and glycine with tetrahydrofolate (THF) serving as the one-carbon carrier. This reaction serves as the major source of one-carbon groups required for the biosynthesis of purines, thymidylate, methionine, and other important biomolecules. Also exhibits THF-independent aldolase activity toward beta-hydroxyamino acids, producing glycine and aldehydes, via a retro-aldol mechanism. This chain is Serine hydroxymethyltransferase, found in Chlamydia muridarum (strain MoPn / Nigg).